A 305-amino-acid chain; its full sequence is Heme A synthase (305 aa).

The Cytoplasmic segment spans residues 1 to 6 (MKKFLK). Residues 7-27 (VWSVLTIICMTVVVFGGALVT) traverse the membrane as a helical segment. Topologically, residues 28–63 (KTGSADGCGNSWPLCNGQLVRLTDVTPEKLIEFMHR) are extracellular. A disulfide bridge connects residues Cys-35 and Cys-42. Residue Glu-59 is part of the active site. His-62 provides a ligand contact to heme o. Residues 64–84 (MTTGISSIFVIVLAICAWIYM) traverse the membrane as a helical segment. Residues 85 to 92 (KNRRETKP) lie on the Cytoplasmic side of the membrane. Residues 93 to 113 (LAIIAVLFLIIQALMGMAAVV) traverse the membrane as a helical segment. At 114 to 122 (WGQNPYIMA) the chain is on the extracellular side. Residues 123-143 (LHFGISIICYASIVLLALMIF) traverse the membrane as a helical segment. Heme o is bound at residue His-124. Residues 144–160 (EVDRKFDARNLVMGTKL) are Cytoplasmic-facing. The helical transmembrane segment at 161-181 (RINIYALTIYTYLAVYTGALV) threads the bilayer. The Extracellular portion of the chain corresponds to 182–212 (RHEKASMAVPVWPFENGHFIMPTSVQDYVQY). A helical membrane pass occupies residues 213–233 (FHRLAAFILIVWLLYVTWLVF). Position 214 (His-214) interacts with heme b. The Cytoplasmic segment spans residues 234–240 (RDYRRYR). The helical transmembrane segment at 241-261 (VLTFSMVLSLVFIALQAVTGA) threads the bilayer. Residues 262–271 (LSVYTGVNLY) are Extracellular-facing. A helical transmembrane segment spans residues 272–292 (IALAHSLIITMLFALLCYLCL). His-276 is a heme b binding site. Residues 293 to 305 (LASRSKSNRLRIK) are Cytoplasmic-facing.

This sequence belongs to the COX15/CtaA family. Type 1 subfamily. Interacts with CtaB. The cofactor is heme b.

The protein resides in the cell membrane. The catalysed reaction is Fe(II)-heme o + 2 A + H2O = Fe(II)-heme a + 2 AH2. The protein operates within porphyrin-containing compound metabolism; heme A biosynthesis; heme A from heme O: step 1/1. Functionally, catalyzes the conversion of heme O to heme A by two successive hydroxylations of the methyl group at C8. The first hydroxylation forms heme I, the second hydroxylation results in an unstable dihydroxymethyl group, which spontaneously dehydrates, resulting in the formyl group of heme A. The protein is Heme A synthase of Listeria monocytogenes serotype 4b (strain F2365).